The sequence spans 70 residues: Protein SlyX homolog (70 aa).

The protein belongs to the SlyX family.

The chain is Protein SlyX homolog from Shewanella sp. (strain MR-7).